Reading from the N-terminus, the 569-residue chain is Ribosome-inactivating protein SNAI' (569 aa).

The N-terminal stretch at 1 to 28 (MKVVATILYLVVLAICGLGIHGAHPTHS) is a signal peptide. N-linked (GlcNAc...) asparagine glycosylation is present at Asn-40. Residue Glu-201 is part of the active site. 3 disulfide bridges follow: Cys-286–Cys-311, Cys-328–Cys-347, and Cys-369–Cys-381. Ricin B-type lectin domains lie at 315–435 (EEVT…WIVG) and 437–565 (VEPL…WIAS). Residues 325-365 (DGFCAEVKNGDEKDGTPVQLSSCGEQSNQQWTFSTDGTIQS) form a 1-alpha repeat. One copy of the 1-beta repeat lies at 366–401 (LGKCLTTSSSVMIYNCKVVPPESTKWVVSIDGTITN). The 1-gamma repeat unit spans residues 404 to 436 (SGLVLTAPKAAEGTLVSLEKNVHAARQGWIVGN). Residues 448–488 (EQMCLETNPGNNDVSLGDCSVKSASKVDQKWALYGDGTIRV) form a 2-alpha repeat. 2 disulfide bridges follow: Cys-451-Cys-466 and Cys-495-Cys-512. Residues 492-530 (RSLCVTSEGKSSNEPIIILKCLGWANQRWVFNTDGTISN) form a 2-beta repeat. The stretch at 533 to 566 (SKLVMHVDQNDVPLRKIILSHPSGTSNQQWIAST) is one 2-gamma repeat.

This sequence in the N-terminal section; belongs to the ribosome-inactivating protein family. Type 2 RIP subfamily. As to quaternary structure, disulfide-linked dimer of A and B chains.

The enzyme catalyses Endohydrolysis of the N-glycosidic bond at one specific adenosine on the 28S rRNA.. Its function is as follows. The A chain is responsible for inhibiting protein synthesis through the catalytic inactivation of 60S ribosomal subunits by removing adenine from position 4,324 of 28S rRNA. The B chain binds to cell receptors and probably facilitates the entry into the cell of the A chain; B chains are also responsible for cell agglutination (lectin activity). Agglutination is inhibited by Neu5Ac(alpha2,6)lactose, and N-linked glycoproteins such as fetuin and orosomucoid. In Sambucus nigra (European elder), this protein is Ribosome-inactivating protein SNAI'.